The chain runs to 421 residues: Testin (421 aa).

Residues 92–199 (MILTNPVAAK…GDVKLPREMD (108 aa)) enclose the PET domain. The interval 133–164 (EKQPVAGSEGAQYRKKQLAKQLPAHDQDPSKC) is disordered. Over residues 155–164 (PAHDQDPSKC) the composition is skewed to basic and acidic residues. LIM zinc-binding domains lie at 234–297 (YSCY…CDSE), 299–359 (PRCA…NHAV), and 362–421 (QGCH…KMMS).

The protein belongs to the prickle / espinas / testin family. Interacts via LIM domain 1 with ZYX. Interacts (via LIM domain 3) with ENAH and VASP. Interacts with ALKBH4, talin, actin, alpha-actinin, GRIP1 and PXN. Interacts (via LIM domain 2) with ACTL7A (via N-terminus). Heterodimer with ACTL7A; the heterodimer interacts with ENAH to form a heterotrimer.

It localises to the cytoplasm. It is found in the cell junction. The protein localises to the focal adhesion. In terms of biological role, scaffold protein that may play a role in cell adhesion, cell spreading and in the reorganization of the actin cytoskeleton. Plays a role in the regulation of cell proliferation. May act as a tumor suppressor. The polypeptide is Testin (TES) (Equus caballus (Horse)).